Here is a 419-residue protein sequence, read N- to C-terminus: MAQEVIKIRGGRTLNGEVNISGAKNSAVAIIPATLLAQGHVKLEGLPQISDVKTLVSLLEDLNIKASLNGMELEVDTTEIQNAALPNNKVESLRASYYMMGAMLGRFKKCVIGLPGGCPLGPRPIDQHIKGFKALGAEIDESSTTSMKIEAKELKGAHIFLDMVSVGATINIMLAAVYATGQTVIENAAKEPEVVDVANFLTSMGANIKGAGTSTIKINGVKELHGSEYQVIPDRIEAGTYMCIAAACGENVILNNIVPKHVETLTAKFSELGVNVDVRDERIRINNNAPYQFVDIKTLVYPGFATDLQQPITPLLFMANGPSFVTDTIYPERFKHVEELKRMGANIEVDEGTATIKPSTLHGAEVYASDLRAGACLIIAGLIAEGVTTIYNVKHIYRGYTDIVEHLKALGADIWTETV.

24–25 lines the phosphoenolpyruvate pocket; that stretch reads KN. Residue R94 participates in UDP-N-acetyl-alpha-D-glucosamine binding. The active-site Proton donor is C118. At C118 the chain carries 2-(S-cysteinyl)pyruvic acid O-phosphothioketal. UDP-N-acetyl-alpha-D-glucosamine contacts are provided by residues 123–127, D307, and I329; that span reads RPIDQ.

Belongs to the EPSP synthase family. MurA subfamily.

The protein localises to the cytoplasm. The enzyme catalyses phosphoenolpyruvate + UDP-N-acetyl-alpha-D-glucosamine = UDP-N-acetyl-3-O-(1-carboxyvinyl)-alpha-D-glucosamine + phosphate. The protein operates within cell wall biogenesis; peptidoglycan biosynthesis. Its function is as follows. Cell wall formation. Adds enolpyruvyl to UDP-N-acetylglucosamine. The protein is UDP-N-acetylglucosamine 1-carboxyvinyltransferase 2 of Staphylococcus aureus (strain MSSA476).